The following is a 610-amino-acid chain: Elongation factor 4 (610 aa).

The tr-type G domain occupies 11-193 (EKIRNFSIIA…QIVEKVPAPT (183 aa)). GTP-binding positions include 23–28 (DHGKST) and 140–143 (NKID).

Belongs to the TRAFAC class translation factor GTPase superfamily. Classic translation factor GTPase family. LepA subfamily.

Its subcellular location is the cell membrane. It carries out the reaction GTP + H2O = GDP + phosphate + H(+). Its function is as follows. Required for accurate and efficient protein synthesis under certain stress conditions. May act as a fidelity factor of the translation reaction, by catalyzing a one-codon backward translocation of tRNAs on improperly translocated ribosomes. Back-translocation proceeds from a post-translocation (POST) complex to a pre-translocation (PRE) complex, thus giving elongation factor G a second chance to translocate the tRNAs correctly. Binds to ribosomes in a GTP-dependent manner. In Streptococcus pyogenes serotype M3 (strain ATCC BAA-595 / MGAS315), this protein is Elongation factor 4.